The sequence spans 422 residues: Protein krasavietz (422 aa).

Positions 1-26 are disordered; sequence MSQKTERPVLSGQRIKTRKRDEREKY. Positions 244–415 constitute a W2 domain; it reads KLHKAQASQE…QSAEEESESE (172 aa). 3 positions are modified to phosphoserine: Ser-407, Ser-412, and Ser-414.

Belongs to the BZW family. Expressed in mushroom bodies.

Functionally, may be involved in memory formation. This Drosophila melanogaster (Fruit fly) protein is Protein krasavietz (kra).